The sequence spans 39 residues: Photosystem II reaction center protein L (39 aa).

The chain crosses the membrane as a helical span at residues 18–38; that stretch reads SLYLGLLSVLVLGILFSSYFF.

Belongs to the PsbL family. As to quaternary structure, PSII is composed of 1 copy each of membrane proteins PsbA, PsbB, PsbC, PsbD, PsbE, PsbF, PsbH, PsbI, PsbJ, PsbK, PsbL, PsbM, PsbT, PsbX, PsbY, Psb30/Ycf12, peripheral proteins PsbO, CyanoQ (PsbQ), PsbU, PsbV and a large number of cofactors. It forms dimeric complexes.

The protein localises to the cellular thylakoid membrane. One of the components of the core complex of photosystem II (PSII). PSII is a light-driven water:plastoquinone oxidoreductase that uses light energy to abstract electrons from H(2)O, generating O(2) and a proton gradient subsequently used for ATP formation. It consists of a core antenna complex that captures photons, and an electron transfer chain that converts photonic excitation into a charge separation. This subunit is found at the monomer-monomer interface and is required for correct PSII assembly and/or dimerization. The sequence is that of Photosystem II reaction center protein L from Prochlorococcus marinus subsp. pastoris (strain CCMP1986 / NIES-2087 / MED4).